Reading from the N-terminus, the 124-residue chain is Small ribosomal subunit protein uS12 (124 aa).

Residue D89 is modified to 3-methylthioaspartic acid. Positions 105–124 are disordered; sequence AGVKDRRQSRSKYGAKRPKA. Residues 113–124 show a composition bias toward basic residues; the sequence is SRSKYGAKRPKA.

Belongs to the universal ribosomal protein uS12 family. In terms of assembly, part of the 30S ribosomal subunit. Contacts proteins S8 and S17. May interact with IF1 in the 30S initiation complex.

With S4 and S5 plays an important role in translational accuracy. In terms of biological role, interacts with and stabilizes bases of the 16S rRNA that are involved in tRNA selection in the A site and with the mRNA backbone. Located at the interface of the 30S and 50S subunits, it traverses the body of the 30S subunit contacting proteins on the other side and probably holding the rRNA structure together. The combined cluster of proteins S8, S12 and S17 appears to hold together the shoulder and platform of the 30S subunit. In Synechococcus elongatus (strain ATCC 33912 / PCC 7942 / FACHB-805) (Anacystis nidulans R2), this protein is Small ribosomal subunit protein uS12 (rpsL).